The sequence spans 220 residues: Transcriptional regulatory protein LnrK (220 aa).

The Response regulatory domain occupies 3–119 (KIIITDDQDI…TIVKAVMTVH (117 aa)). The residue at position 54 (Asp54) is a 4-aspartylphosphate. Residues 151-216 (KPNELLDLTE…QAAIYSVRYG (66 aa)) enclose the HTH luxR-type domain. The segment at residues 175–194 (NKEIAEKLYITEGTVKNHVS) is a DNA-binding region (H-T-H motif).

Post-translationally, phosphorylated by LnrJ.

It localises to the cytoplasm. Functionally, required for resistance to linearmycins, a family of antibiotic-specialized metabolites produced by some streptomycetes. Member of the two-component regulatory system LnrJ/LnrK, which induces expression of the LnrLMN ABC transporter in response to linearmycins and other polyenes. Probably binds to the promoter region of the lnrLMN operon and directly regulates its expression. May also promote biofilm formation. The polypeptide is Transcriptional regulatory protein LnrK (Bacillus subtilis (strain 168)).